The sequence spans 81 residues: Protein Vpu (81 aa).

The Extracellular segment spans residues 1–7 (MSNLLAI). The helical transmembrane segment at 8 to 28 (GIAALIVALIITIVVWTIAYI) threads the bilayer. Over 29 to 81 (EYKKLVRQRKINRLYKRISERAEDSGNESEGDAEELAALGEVGPFIPGDINNL) the chain is Cytoplasmic. 2 positions are modified to phosphoserine; by host CK2: serine 53 and serine 57.

It belongs to the HIV-1 VPU protein family. Homopentamer. Interacts with host CD4 and BRTC; these interactions induce proteasomal degradation of CD4. Interacts with host BST2; this interaction leads to the degradation of host BST2. Interacts with host FBXW11. Interacts with host AP1M1; this interaction plays a role in the mistrafficking and subsequent degradation of host BST2. Interacts with host RANBP2; this interaction allows Vpu to down-regulate host BLM sumoylation. In terms of processing, phosphorylated by host CK2. This phosphorylation is necessary for interaction with human BTRC and degradation of CD4.

The protein resides in the host membrane. Its activity is regulated as follows. Ion channel activity is inhibited by hexamethylene amiloride in vitro. Enhances virion budding by targeting host CD4 and Tetherin/BST2 to proteasome degradation. Degradation of CD4 prevents any unwanted premature interactions between viral Env and its host receptor CD4 in the endoplasmic reticulum. Degradation of antiretroviral protein Tetherin/BST2 is important for virion budding, as BST2 tethers new viral particles to the host cell membrane. Mechanistically, Vpu bridges either CD4 or BST2 to BTRC, a substrate recognition subunit of the Skp1/Cullin/F-box protein E3 ubiquitin ligase, induces their ubiquitination and subsequent proteasomal degradation. The alteration of the E3 ligase specificity by Vpu seems to promote the degradation of host IKBKB, leading to NF-kappa-B down-regulation and subsequent apoptosis. Acts as a viroporin that forms an oligomeric ion channel in membranes. Modulates the host DNA repair mechanisms to promote degradation of nuclear viral cDNA in cells that are already productively infected in order to suppress immune sensing and proviral hyper-integration (superinfection). Manipulates PML-NBs and modulates SUMOylation of host BLM protein thereby enhancing its DNA-end processing activity toward viral unintegrated linear DNA. Also inhibits RAD52-mediated homologous repair of viral cDNA, preventing the generation of dead-end circular forms of single copies of the long terminal repeat and permitting sustained nucleolytic attack. In Homo sapiens (Human), this protein is Protein Vpu.